A 246-amino-acid chain; its full sequence is Transcriptional regulatory protein LytR (246 aa).

The Response regulatory domain occupies 2–116; sequence KALIIDDEPL…RIEQAVNKVR (115 aa). Aspartate 53 carries the post-translational modification 4-aspartylphosphate. The HTH LytTR-type domain maps to 141-245; the sequence is LPVEIDDKIH…MKDFKASIGL (105 aa).

As to quaternary structure, homodimer; when phosphorylated. In terms of processing, phosphorylated and dephosphorylated by LytS.

Its subcellular location is the cytoplasm. Its function is as follows. Member of the two-component regulatory system LytR/LytS that regulates genes involved in autolysis, programmed cell death, biofilm formation and cell wall metabolism. Also participates in sensing and responding to host defense cationic antimicrobial peptides (HDPs). Upon phosphorylation by LytS, functions as a transcription regulator by direct binding to promoter regions of target genes including lrgA and lrgB, to positively regulate their expression. This Staphylococcus aureus (strain USA300) protein is Transcriptional regulatory protein LytR (lytR).